A 209-amino-acid chain; its full sequence is Ras-like protein (209 aa).

Residue glycine 15–serine 22 participates in GTP binding. The Effector region motif lies at tyrosine 37–tyrosine 45. Residues aspartate 62–glutamine 66 and asparagine 121–aspartate 124 each bind GTP. Residues cysteine 202 and cysteine 203 are each lipidated (S-palmitoyl cysteine). Position 206 is a cysteine methyl ester (cysteine 206). Cysteine 206 is lipidated: S-geranylgeranyl cysteine. Positions isoleucine 207 to methionine 209 are cleaved as a propeptide — removed in mature form.

It belongs to the small GTPase superfamily. Ras family.

Its subcellular location is the cell membrane. The enzyme catalyses GTP + H2O = GDP + phosphate + H(+). Its activity is regulated as follows. Alternates between an inactive form bound to GDP and an active form bound to GTP. Activated by a guanine nucleotide-exchange factor (GEF) and inactivated by a GTPase-activating protein (GAP). This Laccaria bicolor (Bicoloured deceiver) protein is Ras-like protein.